The chain runs to 334 residues: NAC domain-containing protein 66 (334 aa).

Residues 11 to 175 (VPPGFRFHPT…GWVVCRVFKK (165 aa)) form the NAC domain. A DNA-binding region spans residues 111 to 181 (IGMRKTLVFY…VFKKNNLCKN (71 aa)).

Mostly expressed in anthers. Also present in pollen, base of siliques and inflorescence stems.

The protein localises to the nucleus. Its function is as follows. Transcription activator of genes involved in biosynthesis of secondary walls. Together with NST1, required for the secondary cell wall thickening of the anther endocethium, which is necessary for anther dehiscence. May also regulate the secondary cell wall lignification of other tissues such as tracheary elements. The sequence is that of NAC domain-containing protein 66 (NAC066) from Arabidopsis thaliana (Mouse-ear cress).